The chain runs to 377 residues: Succinyl-diaminopimelate desuccinylase (377 aa).

Residue histidine 68 participates in Zn(2+) binding. Aspartate 70 is a catalytic residue. Residue aspartate 101 participates in Zn(2+) binding. Glutamate 135 (proton acceptor) is an active-site residue. Glutamate 136, glutamate 164, and histidine 350 together coordinate Zn(2+).

This sequence belongs to the peptidase M20A family. DapE subfamily. In terms of assembly, homodimer. Requires Zn(2+) as cofactor. It depends on Co(2+) as a cofactor.

It catalyses the reaction N-succinyl-(2S,6S)-2,6-diaminopimelate + H2O = (2S,6S)-2,6-diaminopimelate + succinate. The protein operates within amino-acid biosynthesis; L-lysine biosynthesis via DAP pathway; LL-2,6-diaminopimelate from (S)-tetrahydrodipicolinate (succinylase route): step 3/3. Functionally, catalyzes the hydrolysis of N-succinyl-L,L-diaminopimelic acid (SDAP), forming succinate and LL-2,6-diaminopimelate (DAP), an intermediate involved in the bacterial biosynthesis of lysine and meso-diaminopimelic acid, an essential component of bacterial cell walls. This Acinetobacter baumannii (strain SDF) protein is Succinyl-diaminopimelate desuccinylase.